Consider the following 301-residue polypeptide: Cutinase (301 aa).

A signal peptide spans 1–40 (MAVMTPRRERSSLLSRALQVTAAAATALVTAVSLAAPAHA). Tyrosine 100 lines the poly(ethylene terephthalate) pocket. The active-site Nucleophile is serine 170. The poly(ethylene terephthalate) site is built by methionine 171 and tryptophan 195. Active-site charge relay system residues include aspartate 216 and histidine 248. An intrachain disulfide couples cysteine 281 to cysteine 299.

The protein belongs to the AB hydrolase superfamily.

The protein resides in the secreted. It localises to the periplasm. It catalyses the reaction a butanoate ester + H2O = an aliphatic alcohol + butanoate + H(+). The enzyme catalyses (ethylene terephthalate)(n) + H2O = (ethylene terephthalate)(n-1) + 4-[(2-hydroxyethoxy)carbonyl]benzoate + H(+). It carries out the reaction cutin + H2O = cutin monomers.. With respect to regulation, activated by magnesium ions. Activated by calcium ions. Inhibited by the serine hydrolase inhibitor phenylmethanesulfonyl fluoride (PMSF). Its function is as follows. Catalyzes the hydrolysis of cutin, a polyester that forms the structure of plant cuticle. Shows esterase activity towards p-nitrophenol-linked aliphatic esters (pNP-aliphatic esters). Also hydrolyzes the triglyceride triolein. Capable of degrading the plastic poly(ethylene terephthalate) (PET), the most abundant polyester plastic in the world. The polypeptide is Cutinase (Thermobifida fusca (strain YX)).